A 193-amino-acid chain; its full sequence is dCTP deaminase (193 aa).

DCTP is bound by residues 110–115 (RSSLAR), Asp128, 136–138 (VLE), Tyr171, Lys178, and Gln182. The active-site Proton donor/acceptor is the Glu138. The segment at 171 to 193 (YHQRQDAKYHNQKGAVASRIDKD) is disordered.

This sequence belongs to the dCTP deaminase family. Homotrimer.

It catalyses the reaction dCTP + H2O + H(+) = dUTP + NH4(+). It participates in pyrimidine metabolism; dUMP biosynthesis; dUMP from dCTP (dUTP route): step 1/2. Functionally, catalyzes the deamination of dCTP to dUTP. The protein is dCTP deaminase of Hamiltonella defensa subsp. Acyrthosiphon pisum (strain 5AT).